Here is a 123-residue protein sequence, read N- to C-terminus: Small ribosomal subunit protein uS12cz/uS12cy (123 aa).

The protein belongs to the universal ribosomal protein uS12 family. In terms of assembly, part of the 30S ribosomal subunit.

The protein resides in the plastid. Its subcellular location is the chloroplast. With S4 and S5 plays an important role in translational accuracy. Located at the interface of the 30S and 50S subunits. This chain is Small ribosomal subunit protein uS12cz/uS12cy (rps12-A), found in Daucus carota (Wild carrot).